The following is a 381-amino-acid chain: Methanesulfonate monooxygenase (381 aa).

Belongs to the SsuD family.

It carries out the reaction an alkanesulfonate + FMNH2 + O2 = an aldehyde + FMN + sulfite + H2O + 2 H(+). Functionally, catalyzes the desulfonation of aliphatic sulfonates. Shows highest activity with methanesulfonate. The protein is Methanesulfonate monooxygenase (msuD) of Pseudomonas aeruginosa (strain ATCC 15692 / DSM 22644 / CIP 104116 / JCM 14847 / LMG 12228 / 1C / PRS 101 / PAO1).